A 340-amino-acid chain; its full sequence is Dihydroorotate dehydrogenase (quinone) (340 aa).

Residues 61 to 65 and Thr-85 contribute to the FMN site; that span reads AGLDK. Lys-65 provides a ligand contact to substrate. Substrate is bound at residue 110 to 114; it reads NRMGF. Positions 138 and 171 each coordinate FMN. Residue Asn-171 coordinates substrate. Ser-174 (nucleophile) is an active-site residue. Asn-176 provides a ligand contact to substrate. FMN contacts are provided by Lys-216 and Thr-244. 245 to 246 lines the substrate pocket; that stretch reads NT. FMN contacts are provided by residues Gly-267, Gly-296, and 317-318; that span reads YS.

It belongs to the dihydroorotate dehydrogenase family. Type 2 subfamily. In terms of assembly, monomer. FMN is required as a cofactor.

It localises to the cell membrane. The catalysed reaction is (S)-dihydroorotate + a quinone = orotate + a quinol. Its pathway is pyrimidine metabolism; UMP biosynthesis via de novo pathway; orotate from (S)-dihydroorotate (quinone route): step 1/1. Functionally, catalyzes the conversion of dihydroorotate to orotate with quinone as electron acceptor. The chain is Dihydroorotate dehydrogenase (quinone) from Pseudomonas putida (strain ATCC 47054 / DSM 6125 / CFBP 8728 / NCIMB 11950 / KT2440).